A 243-amino-acid chain; its full sequence is Transcription factor TFIIS homolog (243 aa).

A TFIIS central domain is found at 77-201; the sequence is MRDIIQMMFF…SQQKVAEKTS (125 aa). The TFIIS-type zinc finger occupies 202-242; sequence QLYKCPNCKQRMCTYREVQTRALDEPSTIFCTCKKCGHEFI. Zn(2+) contacts are provided by C206, C209, C234, and C237.

Belongs to the TFS-II family.

Its function is as follows. Putative initiation factor. Necessary for efficient transcription elongation past template-encoded arresting sites. The polypeptide is Transcription factor TFIIS homolog (Ornithodoros (relapsing fever ticks)).